Consider the following 80-residue polypeptide: Cell division protein ZapB (80 aa).

Residues 3–80 (FEVLEQLESK…ALLGKMDEVE (78 aa)) adopt a coiled-coil conformation. The segment covering 41 to 53 (ANELRSQREELEQ) has biased composition (basic and acidic residues). The interval 41 to 60 (ANELRSQREELEQKSQQAQQ) is disordered.

This sequence belongs to the ZapB family. As to quaternary structure, homodimer. The ends of the coiled-coil dimer bind to each other, forming polymers. Interacts with FtsZ.

It is found in the cytoplasm. Its function is as follows. Non-essential, abundant cell division factor that is required for proper Z-ring formation. It is recruited early to the divisome by direct interaction with FtsZ, stimulating Z-ring assembly and thereby promoting cell division earlier in the cell cycle. Its recruitment to the Z-ring requires functional FtsA or ZipA. The chain is Cell division protein ZapB from Vibrio campbellii (strain ATCC BAA-1116).